Here is a 376-residue protein sequence, read N- to C-terminus: Deoxyguanosinetriphosphate triphosphohydrolase-like protein (376 aa).

Residues 1–32 (MEPSFAPYAAHSSQTRGRVHREAPAAPRSEFQ) form a disordered region. The HD domain maps to 65–196 (RLTHSIEVAQ…ANLADEIAYN (132 aa)).

This sequence belongs to the dGTPase family. Type 2 subfamily.

The chain is Deoxyguanosinetriphosphate triphosphohydrolase-like protein from Thiobacillus denitrificans (strain ATCC 25259 / T1).